The sequence spans 219 residues: Protein YNG1 (219 aa).

The PHD-type; degenerate zinc finger occupies 155-204; the sequence is EVYCFCRNVSYGPMVACDNPACPFEWFHYGCVGLKQAPKGKWYCSKDCKE. Residues cysteine 158, cysteine 160, cysteine 171, cysteine 176, histidine 182, cysteine 185, cysteine 198, and cysteine 202 each contribute to the Zn(2+) site.

It belongs to the ING family. As to quaternary structure, component of the NuA3 histone acetyltransferase (HAT) complex. The NuA3 HAT complex has 2 functionally distinct forms that participate in transcription. The NuA3a HAT complex is composed of at least NTO1, SAS3, TAF14, YNG1 and EAF6. The NuA3b HAT complex contains an additional subunit, PDP3. Interacts with H3K4me3 and to a lesser extent with H3K4me2.

Its subcellular location is the nucleus. Its function is as follows. Histone-binding component of the NuA3a histone acetyltransferase complex. Targets the NuA3a HAT complex via histone H3K4me3 to facilitate transcription initiation at promoter regions. SAS3 then acetylates H3K14, leading to transcription initiation at a subset of genes. YNG1 is required for the HAT activity of NuA3 but not for its integrity. Mediates the interaction of SAS3 with nucleosomes. This Saccharomyces cerevisiae (strain ATCC 204508 / S288c) (Baker's yeast) protein is Protein YNG1 (YNG1).